The chain runs to 150 residues: SsrA-binding protein (150 aa).

It belongs to the SmpB family.

The protein resides in the cytoplasm. Its function is as follows. Required for rescue of stalled ribosomes mediated by trans-translation. Binds to transfer-messenger RNA (tmRNA), required for stable association of tmRNA with ribosomes. tmRNA and SmpB together mimic tRNA shape, replacing the anticodon stem-loop with SmpB. tmRNA is encoded by the ssrA gene; the 2 termini fold to resemble tRNA(Ala) and it encodes a 'tag peptide', a short internal open reading frame. During trans-translation Ala-aminoacylated tmRNA acts like a tRNA, entering the A-site of stalled ribosomes, displacing the stalled mRNA. The ribosome then switches to translate the ORF on the tmRNA; the nascent peptide is terminated with the 'tag peptide' encoded by the tmRNA and targeted for degradation. The ribosome is freed to recommence translation, which seems to be the essential function of trans-translation. This chain is SsrA-binding protein, found in Borrelia garinii subsp. bavariensis (strain ATCC BAA-2496 / DSM 23469 / PBi) (Borreliella bavariensis).